Reading from the N-terminus, the 614-residue chain is Maltose permease MAL31 (614 aa).

Positions 1 to 48 (MKGLSSLINRKKDRNDSHLDEIENGVNATEFNSIEMEEQGKKSDFDLS) are disordered. Residues 1-108 (MKGLSSLINR…AAAWSLLVST (108 aa)) are Cytoplasmic-facing. The span at 38–48 (EQGKKSDFDLS) shows a compositional bias: basic and acidic residues. Residues 109 to 129 (TLIQEGYDTAILGAFYALPVF) traverse the membrane as a helical segment. The Extracellular portion of the chain corresponds to 130–144 (QKKYGSLNSNTGDYE). The chain crosses the membrane as a helical span at residues 145–165 (ISVSWQIGLCLCYMAGEIVGL). Over 166-180 (QMTGPSVDYMGNRYT) the chain is Cytoplasmic. The chain crosses the membrane as a helical span at residues 181–201 (LIMALFFLAAFIFILYFCKSL). Glycine 202 is a topological domain (extracellular). A helical membrane pass occupies residues 203 to 223 (MIAVGQALCGMPWGCFQCLTV). The Cytoplasmic segment spans residues 224–236 (SYASEICPLALRY). A helical transmembrane segment spans residues 237 to 257 (YLTTYSNLCWAFGQLFAAGIM). The Extracellular portion of the chain corresponds to 258–272 (KNSQNKYANSELGYK). Residues 273-293 (LPFALQWIWPLPLAVGIFFAP) form a helical membrane-spanning segment. The Cytoplasmic segment spans residues 294 to 364 (ESPWWLVKKG…KDGINRRRTR (71 aa)). Residues 365–385 (IACLCWIGQCSCGASLIGYST) traverse the membrane as a helical segment. At 386–398 (YFYEKAGVSTDTA) the chain is on the extracellular side. The chain crosses the membrane as a helical span at residues 399–419 (FTFSIIQYCLGIAATFISWWA). Topologically, residues 420–427 (SKYCGRFD) are cytoplasmic. Residues 428 to 448 (LYAFGLAFQAIMFFIIGGLGC) form a helical membrane-spanning segment. The Extracellular portion of the chain corresponds to 449–460 (SDTHGAKMGSGA). A helical transmembrane segment spans residues 461–481 (LLMVVAFFYNLGIAPVVFCLV). The Cytoplasmic segment spans residues 482–493 (SEIPSSRLRTKT). The helical transmembrane segment at 494–514 (IILARNAYNVIQVVVTVLIMY) threads the bilayer. The Extracellular portion of the chain corresponds to 515–526 (QLNSEKWNWGAK). The chain crosses the membrane as a helical span at residues 527–547 (SGFFWGGFCLATLAWAVVDLP). Topologically, residues 548-614 (ETAGRTFIEI…GRNTSSVVNK (67 aa)) are cytoplasmic. Residues 595–614 (EDLETSVVDEGRNTSSVVNK) form a disordered region.

The protein belongs to the major facilitator superfamily. Sugar transporter (TC 2.A.1.1) family.

Its subcellular location is the membrane. High-affinity uptake of maltose and maltotriose. Also transports turanose but not alpha-methylglucoside, melezitose or trehalose. This chain is Maltose permease MAL31 (MAL31), found in Saccharomyces cerevisiae (strain ATCC 204508 / S288c) (Baker's yeast).